A 223-amino-acid polypeptide reads, in one-letter code: Ribosomal RNA small subunit methyltransferase G (223 aa).

S-adenosyl-L-methionine-binding positions include glycine 83, leucine 88, 134 to 135, and arginine 152; that span reads AE.

It belongs to the methyltransferase superfamily. RNA methyltransferase RsmG family.

It localises to the cytoplasm. Its function is as follows. Specifically methylates the N7 position of guanine in position 518 of 16S rRNA. The chain is Ribosomal RNA small subunit methyltransferase G from Corynebacterium diphtheriae (strain ATCC 700971 / NCTC 13129 / Biotype gravis).